Here is a 504-residue protein sequence, read N- to C-terminus: Maturase K (504 aa).

Belongs to the intron maturase 2 family. MatK subfamily.

The protein localises to the plastid. It localises to the chloroplast. Its function is as follows. Usually encoded in the trnK tRNA gene intron. Probably assists in splicing its own and other chloroplast group II introns. This Prionotes cerinthoides (Climbing heath) protein is Maturase K.